Here is a 263-residue protein sequence, read N- to C-terminus: Palmitoyltransferase ZDHHC22 (263 aa).

Over 1–9 (MLALRLLNV) the chain is Cytoplasmic. The helical transmembrane segment at 10-30 (VAPAYFLCISLVTFVLQLFLF) threads the bilayer. The Lumenal portion of the chain corresponds to 31-48 (LPSMREDPAAARLFSPAL). A helical membrane pass occupies residues 49–69 (LHGALFLFLSANALGNYVLVI). The Cytoplasmic portion of the chain corresponds to 70-125 (QNSPDDLGACQGASARKTPCPSPSTHFCRVCARVTLRHDHHCFFTGNCIGSRNMRN). In terms of domain architecture, DHHC spans 92-131 (PSTHFCRVCARVTLRHDHHCFFTGNCIGSRNMRNFVLFCL). Catalysis depends on C111, which acts as the S-palmitoyl cysteine intermediate. The next 2 membrane-spanning stretches (helical) occupy residues 126–146 (FVLFCLYTSLACLYSMVAGVA) and 147–167 (YISAVLSISFAHPLAFLTLLP). At 168 to 182 (TSISQFFSGAVLGSE) the chain is on the cytoplasmic side. Residues 183–203 (MFVILMLYLWFAIGLACAGFC) traverse the membrane as a helical segment. At 204 to 263 (CHQLLLILRGQTRHQVRKGVAVRARPWRKNLQEVFGKRWLLGLLVPMFNVGSESSKQQDK) the chain is on the lumenal side.

This sequence belongs to the DHHC palmitoyltransferase family. In terms of assembly, interacts with CNN3. Widely expressed.

The protein localises to the endoplasmic reticulum membrane. It localises to the golgi apparatus membrane. The catalysed reaction is L-cysteinyl-[protein] + hexadecanoyl-CoA = S-hexadecanoyl-L-cysteinyl-[protein] + CoA. In terms of biological role, palmitoyltransferase that could catalyze the addition of palmitate onto various protein substrates and be involved in a variety of cellular processes. Catalyzes the palmitoylation of KCNMA1, regulating localization of KCNMA1 to the plasma membrane. Might also mediate palmitoylation of CNN3. This Homo sapiens (Human) protein is Palmitoyltransferase ZDHHC22.